The chain runs to 439 residues: Xylose isomerase (439 aa).

Active-site residues include H101 and D104. Mg(2+) is bound by residues E232, E268, H271, D296, D307, D309, and D339.

The protein belongs to the xylose isomerase family. In terms of assembly, homotetramer. Requires Mg(2+) as cofactor.

It localises to the cytoplasm. It carries out the reaction alpha-D-xylose = alpha-D-xylulofuranose. The sequence is that of Xylose isomerase from Serratia proteamaculans (strain 568).